The sequence spans 293 residues: 4-hydroxybenzoate octaprenyltransferase (293 aa).

8 helical membrane-spanning segments follow: residues 26–46 (IGTLLLLWPCLMALLFAAKGM), 49–69 (IKVLLIFILGVVIMRACGCII), 102–122 (LFALLGLLAFALVLLLNPLVV), 148–168 (FLGIVWSWSIPMAYAAQLGEV), 173–193 (WWLFAANWCWTVAYDTMYAMI), 217–237 (WIAVFQLMAFGCFLMAGLSAE), 240–260 (FIYALGLLGFIAFSVYQQRLI), and 272–292 (FLNNNWVGMLLFLTLAADYLL).

This sequence belongs to the UbiA prenyltransferase family. Mg(2+) is required as a cofactor.

It localises to the cell inner membrane. It catalyses the reaction all-trans-octaprenyl diphosphate + 4-hydroxybenzoate = 4-hydroxy-3-(all-trans-octaprenyl)benzoate + diphosphate. The protein operates within cofactor biosynthesis; ubiquinone biosynthesis. Catalyzes the prenylation of para-hydroxybenzoate (PHB) with an all-trans polyprenyl group. Mediates the second step in the final reaction sequence of ubiquinone-8 (UQ-8) biosynthesis, which is the condensation of the polyisoprenoid side chain with PHB, generating the first membrane-bound Q intermediate 3-octaprenyl-4-hydroxybenzoate. The sequence is that of 4-hydroxybenzoate octaprenyltransferase from Shewanella denitrificans (strain OS217 / ATCC BAA-1090 / DSM 15013).